A 512-amino-acid polypeptide reads, in one-letter code: Sucrose transport protein SUC2 (512 aa).

The Cytoplasmic portion of the chain corresponds to 1 to 31 (MVSHPMEKAANGASALETQTGELDQPERLRK). The chain crosses the membrane as a helical span at residues 32–52 (IISVSSIAAGVQFGWALQLSL). Residues 53 to 65 (LTPYVQLLGIPHK) are Extracellular-facing. A helical transmembrane segment spans residues 66-86 (WASLIWLCGPISGMLVQPIVG). Over 87-100 (YHSDRCTSRFGRRR) the chain is Cytoplasmic. Residues 101–121 (PFIVAGAGLVTVAVFLIGYAA) traverse the membrane as a helical segment. The Extracellular portion of the chain corresponds to 122–138 (DIGHSMGDQLDKPPKTR). The helical transmembrane segment at 139–159 (AIAIFALGFWILDVANNTLQG) threads the bilayer. Residues 160 to 177 (PCRAFLADLSAGNAKKTR) are Cytoplasmic-facing. The helical transmembrane segment at 178–198 (TANAFFSFFMAVGNVLGYAAG) threads the bilayer. Residues 199-223 (SYRNLYKVVPFTMTESCDLYCANLK) are Extracellular-facing. A helical membrane pass occupies residues 224–244 (TCFFLSITLLLIVTFVSLCYV). Over 245-278 (KEKPWTPEPTADGKASNVPFFGEIFGAFKELKRP) the chain is Cytoplasmic. Residues 279 to 299 (MWMLLIVTALNWIAWFPFLLF) form a helical membrane-spanning segment. At 300 to 332 (DTDWMGREVYGGNSDATATAASKKLYNDGVRAG) the chain is on the extracellular side. A helical transmembrane segment spans residues 333–353 (ALGLMLNAIVLGFMSLGVEWI). At 354–362 (GRKLGGAKR) the chain is on the cytoplasmic side. A helical membrane pass occupies residues 363-383 (LWGIVNFILAICLAMTVVVTK). The Extracellular portion of the chain corresponds to 384-407 (QAENHRRDHGGAKTGPPGNVTAGA). Residue N402 is glycosylated (N-linked (GlcNAc...) asparagine). Residues 408–428 (LTLFAILGIPQAITFSIPFAL) traverse the membrane as a helical segment. The Cytoplasmic segment spans residues 429 to 440 (ASIFSTNSGAGQ). A helical membrane pass occupies residues 441–461 (GLSLGVLNLAIVVPQMVISVG). Residues 462-473 (GGPFDELFGGGN) lie on the Extracellular side of the membrane. Residues 474 to 494 (IPAFVLGAIAAAVSGVLALTV) traverse the membrane as a helical segment. The Cytoplasmic segment spans residues 495–512 (LPSPPPDAPAFKATMGFH).

This sequence belongs to the glycoside-pentoside-hexuronide (GPH) cation symporter transporter (TC 2.A.2.4) family. As to quaternary structure, homodimer. Interacts with SUC3 and SUC4. Expressed in leaves and, to a lower extent, in roots, flowers and stems. Highly specific to the phloem, exclusively localized in companion cells (at protein level).

It localises to the cell membrane. It carries out the reaction sucrose(out) + H(+)(out) = sucrose(in) + H(+)(in). Its pathway is glycan biosynthesis; sucrose metabolism. Inhibited by protonophores (e.g. dinitrophenol and carbonyl cyanide m-chlorophenyl-hydrazone (CCCP)) and SH group inhibitors (e.g. N-ethylmaleimide (NEM) and p-chloromercuriphenyl sulphonic acid (PCMPS)). In terms of biological role, responsible for the transport of sucrose into the cell, with the concomitant uptake of protons (symport system). Can also transport other glucosides such as maltose, arbutin (hydroquinone-beta-D-glucoside), salicin (2-(hydroxymethyl)phenyl-beta-D-glucoside), alpha-phenylglucoside, beta-phenylglucoside, alpha-paranitrophenylglucoside, beta-paranitrophenylglucoside, and paranitrophenyl-beta-thioglucoside. May also transport biotin. Required for apoplastic phloem sucrose loading in source tissues (e.g. leaves) in order to transport it to sink tissues (e.g. roots, flowers). This is Sucrose transport protein SUC2 from Arabidopsis thaliana (Mouse-ear cress).